Here is a 446-residue protein sequence, read N- to C-terminus: Glycine--tRNA ligase (446 aa).

Positions 100 and 158 each coordinate substrate. ATP-binding positions include 190 to 192 (RNE), 200 to 205 (FRTREF), 275 to 276 (EL), and 319 to 322 (GIER). Position 205–209 (205–209 (FEQFE)) interacts with substrate. 315–319 (EPAVG) lines the substrate pocket.

Belongs to the class-II aminoacyl-tRNA synthetase family. Homodimer.

The protein resides in the cytoplasm. The enzyme catalyses tRNA(Gly) + glycine + ATP = glycyl-tRNA(Gly) + AMP + diphosphate. Its function is as follows. Catalyzes the attachment of glycine to tRNA(Gly). The polypeptide is Glycine--tRNA ligase (Mycoplasma genitalium (strain ATCC 33530 / DSM 19775 / NCTC 10195 / G37) (Mycoplasmoides genitalium)).